A 159-amino-acid polypeptide reads, in one-letter code: Growth arrest and DNA damage-inducible protein GADD45 gamma (159 aa).

The homodimerization stretch occupies residues 43-86 (VYESAKVLNVDPDNVTFCVLAADEEDEGDIALQIHFTLIQAFCC).

This sequence belongs to the GADD45 family. As to quaternary structure, undergoes concentration-dependent homodimerization, which is required for growth inhibititory activity and enhances interaction with PCNA. Interacts with GADD45GIP1. Interacts with PCNA.

Its function is as follows. Involved in the regulation of growth and apoptosis. Mediates activation of stress-responsive MTK1/MEKK4 MAPKKK. This Bos taurus (Bovine) protein is Growth arrest and DNA damage-inducible protein GADD45 gamma (GADD45G).